The primary structure comprises 314 residues: Ribosomal RNA small subunit methyltransferase H (314 aa).

Residues 36–38 (GGH), Asp56, Phe81, Asp103, and Gln110 each bind S-adenosyl-L-methionine.

Belongs to the methyltransferase superfamily. RsmH family.

It is found in the cytoplasm. It carries out the reaction cytidine(1402) in 16S rRNA + S-adenosyl-L-methionine = N(4)-methylcytidine(1402) in 16S rRNA + S-adenosyl-L-homocysteine + H(+). Specifically methylates the N4 position of cytidine in position 1402 (C1402) of 16S rRNA. The sequence is that of Ribosomal RNA small subunit methyltransferase H from Shewanella sediminis (strain HAW-EB3).